The following is a 327-amino-acid chain: 4-hydroxythreonine-4-phosphate dehydrogenase (327 aa).

Residues H134 and T135 each coordinate substrate. 3 residues coordinate a divalent metal cation: H164, H209, and H264. Residues K272, N281, and R290 each contribute to the substrate site.

It belongs to the PdxA family. In terms of assembly, homodimer. Zn(2+) serves as cofactor. It depends on Mg(2+) as a cofactor. Co(2+) is required as a cofactor.

Its subcellular location is the cytoplasm. It carries out the reaction 4-(phosphooxy)-L-threonine + NAD(+) = 3-amino-2-oxopropyl phosphate + CO2 + NADH. The protein operates within cofactor biosynthesis; pyridoxine 5'-phosphate biosynthesis; pyridoxine 5'-phosphate from D-erythrose 4-phosphate: step 4/5. Functionally, catalyzes the NAD(P)-dependent oxidation of 4-(phosphooxy)-L-threonine (HTP) into 2-amino-3-oxo-4-(phosphooxy)butyric acid which spontaneously decarboxylates to form 3-amino-2-oxopropyl phosphate (AHAP). This chain is 4-hydroxythreonine-4-phosphate dehydrogenase, found in Shewanella frigidimarina (strain NCIMB 400).